The chain runs to 167 residues: MAEHQINYASGLPVVLTSVDKLVQWGRSNSLWALSYGLACCAIEMMAAGGSRYDFDRFGTIFRASPRHSEVMIIAGTLCKKHAEFTRRLYDQMPDPKWVISMGSCANTGGMFNTYSTVQGVDRIIPVDIYVPGCAPRPESFQFALMILQKKIRKEKASRKIAPKRLV.

Residues C40, C41, C105, and C134 each contribute to the [4Fe-4S] cluster site.

This sequence belongs to the complex I 20 kDa subunit family. NDH-1 is composed of 14 different subunits. Subunits NuoB, C, D, E, F, and G constitute the peripheral sector of the complex. Requires [4Fe-4S] cluster as cofactor.

It localises to the cell inner membrane. The catalysed reaction is a quinone + NADH + 5 H(+)(in) = a quinol + NAD(+) + 4 H(+)(out). Its function is as follows. NDH-1 shuttles electrons from NADH, via FMN and iron-sulfur (Fe-S) centers, to quinones in the respiratory chain. The immediate electron acceptor for the enzyme in this species is believed to be ubiquinone. Couples the redox reaction to proton translocation (for every two electrons transferred, four hydrogen ions are translocated across the cytoplasmic membrane), and thus conserves the redox energy in a proton gradient. This chain is NADH-quinone oxidoreductase subunit B, found in Campylobacter jejuni (strain RM1221).